The primary structure comprises 445 residues: SVP1-like protein 2 (445 aa).

WD repeat units lie at residues 218–258 (AHKA…LLKE) and 263–302 (LDRA…EGTL). Residues 301–321 (TLNPANPEDHQSSGSNGHIKA) form a disordered region. Over residues 312 to 321 (SSGSNGHIKA) the composition is skewed to polar residues.

This sequence belongs to the WD repeat PROPPIN family.

The protein localises to the vacuole membrane. It localises to the cytoplasmic vesicle membrane. In terms of biological role, involved in mitochondrial or peroxisomal functions and amino acid signaling pathways. This Candida glabrata (strain ATCC 2001 / BCRC 20586 / JCM 3761 / NBRC 0622 / NRRL Y-65 / CBS 138) (Yeast) protein is SVP1-like protein 2 (HSV2).